The following is a 154-amino-acid chain: Snaclec dabocetin subunit alpha (154 aa).

The signal sequence occupies residues 1–23 (MGRFISVSFGLLVVFLSLSGTGA). Intrachain disulfides connect C25–C36, C53–C148, and C123–C140. The 118-residue stretch at 32 to 149 (HEGHCYKVFK…CGDKNPFICK (118 aa)) folds into the C-type lectin domain.

It belongs to the snaclec family. As to quaternary structure, heterodimer of subunits alpha and beta; disulfide-linked. Expressed by the venom gland.

The protein localises to the secreted. Functionally, inhibits ristocetin-induced platelet aggregation via binding to platelet glycoprotein Ibalpha (GP1BA). The chain is Snaclec dabocetin subunit alpha from Daboia siamensis (Eastern Russel's viper).